Reading from the N-terminus, the 513-residue chain is ABC transporter H family member 2 (513 aa).

Residues 39–280 form the ABC transporter domain; that stretch reads LTMKNIHKTY…EHYQKLYKEC (242 aa). 75-82 is a binding site for ATP; that stretch reads GTSGGGKT. Residues 291-471 are disordered; the sequence is VTSVFKNDDD…SSSYSNNNNN (181 aa). Positions 324-360 are enriched in low complexity; that stretch reads SYNNNNSNLNNNSNSNSNNNSNNNNSKNYASSSSSSS. Positions 361–386 are enriched in polar residues; it reads VLNGKLSQSTVNNSSIYNHNNDSPFF. The segment covering 387 to 471 has biased composition (low complexity); it reads NSNNNNNINN…SSSYSNNNNN (85 aa).

The protein belongs to the ABC transporter superfamily.

The sequence is that of ABC transporter H family member 2 (abcH2) from Dictyostelium discoideum (Social amoeba).